Here is a 325-residue protein sequence, read N- to C-terminus: Probable isoaspartyl peptidase/L-asparaginase GA20639 (325 aa).

Catalysis depends on Thr184, which acts as the Nucleophile. Residues 212–215 (RIGD) and 235–238 (TGHG) each bind substrate.

This sequence belongs to the Ntn-hydrolase family. Heterodimer of an alpha and beta chain produced by autocleavage. Post-translationally, cleaved into an alpha and beta chain by autocatalysis; this activates the enzyme. The N-terminal residue of the beta subunit is responsible for the nucleophile hydrolase activity.

The enzyme catalyses L-asparagine + H2O = L-aspartate + NH4(+). It carries out the reaction Cleavage of a beta-linked Asp residue from the N-terminus of a polypeptide.. Has both L-asparaginase and beta-aspartyl peptidase activity. Does not have aspartylglucosaminidase activity and is inactive toward GlcNAc-L-Asn. Likewise, has no activity toward glutamine. In Drosophila pseudoobscura pseudoobscura (Fruit fly), this protein is Probable isoaspartyl peptidase/L-asparaginase GA20639.